The primary structure comprises 300 residues: uncharacterized protein (300 aa).

The protein belongs to the chlamydial CPn_0593/CT_474/TC_0759 family.

This is an uncharacterized protein from Chlamydia muridarum (strain MoPn / Nigg).